A 155-amino-acid chain; its full sequence is 6,7-dimethyl-8-ribityllumazine synthase (155 aa).

5-amino-6-(D-ribitylamino)uracil-binding positions include Phe-24, 58-60 (AFE), and 82-84 (AII). 87–88 (ST) is a (2S)-2-hydroxy-3-oxobutyl phosphate binding site. His-90 (proton donor) is an active-site residue. Residue Phe-115 participates in 5-amino-6-(D-ribitylamino)uracil binding. Arg-129 contributes to the (2S)-2-hydroxy-3-oxobutyl phosphate binding site.

Belongs to the DMRL synthase family.

It carries out the reaction (2S)-2-hydroxy-3-oxobutyl phosphate + 5-amino-6-(D-ribitylamino)uracil = 6,7-dimethyl-8-(1-D-ribityl)lumazine + phosphate + 2 H2O + H(+). It functions in the pathway cofactor biosynthesis; riboflavin biosynthesis; riboflavin from 2-hydroxy-3-oxobutyl phosphate and 5-amino-6-(D-ribitylamino)uracil: step 1/2. Functionally, catalyzes the formation of 6,7-dimethyl-8-ribityllumazine by condensation of 5-amino-6-(D-ribitylamino)uracil with 3,4-dihydroxy-2-butanone 4-phosphate. This is the penultimate step in the biosynthesis of riboflavin. This is 6,7-dimethyl-8-ribityllumazine synthase from Chlorobium phaeobacteroides (strain BS1).